The following is a 360-amino-acid chain: Photosystem II protein D1 3 (360 aa).

The next 3 membrane-spanning stretches (helical) occupy residues 29-46 (YVGWFGVLMIPTLLTATI), 118-133 (HFLLGIFSYMGREWEL), and 142-156 (WIAVAYSAPVAAATA). Histidine 118 serves as a coordination point for chlorophyll a. Pheophytin a is bound at residue tyrosine 126. 2 residues coordinate [CaMn4O5] cluster: aspartate 170 and glutamate 189. A helical transmembrane segment spans residues 197-218 (FHMLGVAGVFGGALFSAMHGSL). Position 198 (histidine 198) interacts with chlorophyll a. A quinone is bound by residues histidine 215 and 264-265 (SF). Residue histidine 215 participates in Fe cation binding. Histidine 272 provides a ligand contact to Fe cation. The helical transmembrane segment at 274-288 (FLAAWPVIGIWFASL) threads the bilayer. Residues histidine 332, glutamate 333, aspartate 342, and alanine 344 each coordinate [CaMn4O5] cluster. Positions 345 to 360 (AGDQAPVALQAPAING) are excised as a propeptide.

This sequence belongs to the reaction center PufL/M/PsbA/D family. As to quaternary structure, PSII is composed of 1 copy each of membrane proteins PsbA, PsbB, PsbC, PsbD, PsbE, PsbF, PsbH, PsbI, PsbJ, PsbK, PsbL, PsbM, PsbT, PsbX, PsbY, PsbZ, Psb30/Ycf12, peripheral proteins PsbO, CyanoQ (PsbQ), PsbU, PsbV and a large number of cofactors. It forms dimeric complexes. The D1/D2 heterodimer binds P680, chlorophylls that are the primary electron donor of PSII, and subsequent electron acceptors. It shares a non-heme iron and each subunit binds pheophytin, quinone, additional chlorophylls, carotenoids and lipids. D1 provides most of the ligands for the Mn4-Ca-O5 cluster of the oxygen-evolving complex (OEC). There is also a Cl(-1) ion associated with D1 and D2, which is required for oxygen evolution. The PSII complex binds additional chlorophylls, carotenoids and specific lipids. serves as cofactor. In terms of processing, tyr-161 forms a radical intermediate that is referred to as redox-active TyrZ, YZ or Y-Z. C-terminally processed by CtpA; processing is essential to allow assembly of the oxygen-evolving complex and thus photosynthetic growth.

The protein resides in the cellular thylakoid membrane. It carries out the reaction 2 a plastoquinone + 4 hnu + 2 H2O = 2 a plastoquinol + O2. In terms of biological role, photosystem II (PSII) is a light-driven water:plastoquinone oxidoreductase that uses light energy to abstract electrons from H(2)O, generating O(2) and a proton gradient subsequently used for ATP formation. It consists of a core antenna complex that captures photons, and an electron transfer chain that converts photonic excitation into a charge separation. The D1/D2 (PsbA/PsbD) reaction center heterodimer binds P680, the primary electron donor of PSII as well as several subsequent electron acceptors. This chain is Photosystem II protein D1 3, found in Picosynechococcus sp. (strain ATCC 27264 / PCC 7002 / PR-6) (Agmenellum quadruplicatum).